A 334-amino-acid polypeptide reads, in one-letter code: Cathepsin R (334 aa).

The first 17 residues, 1 to 17 (MAAVVFIAFLYLGVASG), serve as a signal peptide directing secretion. The propeptide at 18–114 (VPVLDSSLDA…SIMKREAGSI (97 aa)) is activation peptide. Intrachain disulfides connect C136–C179 and C170–C212. C139 is an active-site residue. N-linked (GlcNAc...) asparagine glycosylation occurs at N269. A disulfide bridge links C270 with C323. Active-site residues include H277 and N301.

Belongs to the peptidase C1 family. As to expression, placenta.

Its subcellular location is the lysosome. This chain is Cathepsin R (Ctsr), found in Mus musculus (Mouse).